Here is a 151-residue protein sequence, read N- to C-terminus: 3-dehydroquinate dehydratase (151 aa).

Catalysis depends on Y24, which acts as the Proton acceptor. Substrate-binding residues include N76, H82, and D89. H102 acts as the Proton donor in catalysis. Substrate contacts are provided by residues 103–104 (VS) and R113.

Belongs to the type-II 3-dehydroquinase family. Homododecamer.

It catalyses the reaction 3-dehydroquinate = 3-dehydroshikimate + H2O. Its pathway is metabolic intermediate biosynthesis; chorismate biosynthesis; chorismate from D-erythrose 4-phosphate and phosphoenolpyruvate: step 3/7. Its function is as follows. Catalyzes a trans-dehydration via an enolate intermediate. This chain is 3-dehydroquinate dehydratase, found in Rhodopseudomonas palustris (strain ATCC BAA-98 / CGA009).